The chain runs to 376 residues: Chaperone protein DnaJ (376 aa).

Residues 5-70 form the J domain; that stretch reads DYYEVLGAAK…QKRAAYDQFG (66 aa). Residues 134 to 212 form a CR-type zinc finger; sequence GCDEKIRIPT…CGGQGRVQNT (79 aa). Positions 147, 150, 164, 167, 186, 189, 200, and 203 each coordinate Zn(2+). 4 CXXCXGXG motif repeats span residues 147-154, 164-171, 186-193, and 200-207; these read CDVCHGSG, CTTCGGVG, CPTCKGEG, and CGNCGGQG.

This sequence belongs to the DnaJ family. As to quaternary structure, homodimer. It depends on Zn(2+) as a cofactor.

It localises to the cytoplasm. Participates actively in the response to hyperosmotic and heat shock by preventing the aggregation of stress-denatured proteins and by disaggregating proteins, also in an autonomous, DnaK-independent fashion. Unfolded proteins bind initially to DnaJ; upon interaction with the DnaJ-bound protein, DnaK hydrolyzes its bound ATP, resulting in the formation of a stable complex. GrpE releases ADP from DnaK; ATP binding to DnaK triggers the release of the substrate protein, thus completing the reaction cycle. Several rounds of ATP-dependent interactions between DnaJ, DnaK and GrpE are required for fully efficient folding. Also involved, together with DnaK and GrpE, in the DNA replication of plasmids through activation of initiation proteins. The sequence is that of Chaperone protein DnaJ from Alcanivorax borkumensis (strain ATCC 700651 / DSM 11573 / NCIMB 13689 / SK2).